The chain runs to 474 residues: Methylenetetrahydrofolate--tRNA-(uracil-5-)-methyltransferase TrmFO (474 aa).

14-19 (GGGLAG) is a binding site for FAD.

It belongs to the MnmG family. TrmFO subfamily. The cofactor is FAD.

It localises to the cytoplasm. The catalysed reaction is uridine(54) in tRNA + (6R)-5,10-methylene-5,6,7,8-tetrahydrofolate + NADH + H(+) = 5-methyluridine(54) in tRNA + (6S)-5,6,7,8-tetrahydrofolate + NAD(+). It carries out the reaction uridine(54) in tRNA + (6R)-5,10-methylene-5,6,7,8-tetrahydrofolate + NADPH + H(+) = 5-methyluridine(54) in tRNA + (6S)-5,6,7,8-tetrahydrofolate + NADP(+). Functionally, catalyzes the folate-dependent formation of 5-methyl-uridine at position 54 (M-5-U54) in all tRNAs. The protein is Methylenetetrahydrofolate--tRNA-(uracil-5-)-methyltransferase TrmFO of Caulobacter vibrioides (strain ATCC 19089 / CIP 103742 / CB 15) (Caulobacter crescentus).